The following is a 161-amino-acid chain: uncharacterized protein (161 aa).

The protein to R.leguminosarum PsiB.

This is an uncharacterized protein from Sinorhizobium fredii (strain NBRC 101917 / NGR234).